The sequence spans 119 residues: Chorion class CA protein ERA.2 (119 aa).

The signal sequence occupies residues 1–21 (MSKLVVFLFCIQVCFIQNVYS). Positions 22 to 55 (QCLGRVGPGGPPLGPYGGPLGGPGYGPVGYGGCG) are left arm. The central domain stretch occupies residues 56 to 103 (GYGGSGIGNVAVAGELPVAGSTGVTGQVPVIGAVEFAGPACAVGSVSI). The segment at 104-119 (SGACGPTCGCGGSPFY) is right arm.

Belongs to the chorion protein family.

Its function is as follows. This protein is one of many from the eggshell of the silk moth. The sequence is that of Chorion class CA protein ERA.2 (ERA.2) from Bombyx mori (Silk moth).